Reading from the N-terminus, the 122-residue chain is Protein YqjC (122 aa).

An N-terminal signal peptide occupies residues methionine 1 to alanine 20. The tract at residues glutamine 65–isoleucine 100 is disordered. Basic and acidic residues predominate over residues leucine 66–isoleucine 100.

The protein is Protein YqjC (yqjC) of Escherichia coli (strain K12).